The sequence spans 151 residues: Small ribosomal subunit protein uS13 (151 aa).

It belongs to the universal ribosomal protein uS13 family. Part of the 30S ribosomal subunit. Forms a loose heterodimer with protein S19. Forms two bridges to the 50S subunit in the 70S ribosome.

Its function is as follows. Located at the top of the head of the 30S subunit, it contacts several helices of the 16S rRNA. In the 70S ribosome it contacts the 23S rRNA (bridge B1a) and protein L5 of the 50S subunit (bridge B1b), connecting the 2 subunits; these bridges are implicated in subunit movement. This is Small ribosomal subunit protein uS13 from Staphylothermus marinus (strain ATCC 43588 / DSM 3639 / JCM 9404 / F1).